A 284-amino-acid polypeptide reads, in one-letter code: MEIGLREWLIVIGIIVIAGILFDGWRRMRGGKGKLKFRLDRSLSNLPDDEGSAELLGPPRVLDTHKEPQLDEHDLPSVSMPAREPRESSSSKRGKRGGEPHQGDLNLDLDLDSGPSFSSRDDDFPVEESKSASHSDKDQPQAEEVLVISVICRDAAGFKGPALLQNILESGLRFGEMDIFHRHESMAGNGEVLFSMANAVKPGVFDLDDIDHFSTPAVSFFLGLPGPRHPKQAFDVMVAAARKLSQELNGELKDDQRSVLTAQTIEHYRQRIVEFERRALTQKR.

A topological domain (periplasmic) is located at residue Met-1. Residues Glu-2–Phe-22 form a helical membrane-spanning segment. The Cytoplasmic portion of the chain corresponds to Asp-23–Arg-284. Positions Pro-47–Pro-140 are disordered. 3 stretches are compositionally biased toward basic and acidic residues: residues Leu-62–Leu-75, Arg-83–Gln-102, and Ser-119–Pro-140.

This sequence belongs to the ZipA family. Interacts with FtsZ via their C-terminal domains.

The protein localises to the cell inner membrane. Essential cell division protein that stabilizes the FtsZ protofilaments by cross-linking them and that serves as a cytoplasmic membrane anchor for the Z ring. Also required for the recruitment to the septal ring of downstream cell division proteins. In Pseudomonas fluorescens (strain ATCC BAA-477 / NRRL B-23932 / Pf-5), this protein is Cell division protein ZipA.